A 205-amino-acid polypeptide reads, in one-letter code: Superoxide dismutase [Mn] (205 aa).

Mn(2+) contacts are provided by His30, His78, Asp166, and His170.

The protein belongs to the iron/manganese superoxide dismutase family. Homodimer. Requires Mn(2+) as cofactor.

The catalysed reaction is 2 superoxide + 2 H(+) = H2O2 + O2. Destroys superoxide anion radicals which are normally produced within the cells and which are toxic to biological systems. The polypeptide is Superoxide dismutase [Mn] (sodA) (Chlamydia muridarum (strain MoPn / Nigg)).